The following is a 550-amino-acid chain: Arginine--tRNA ligase (550 aa).

The 'HIGH' region signature appears at Ala-123–His-133.

This sequence belongs to the class-I aminoacyl-tRNA synthetase family. As to quaternary structure, monomer.

The protein resides in the cytoplasm. It catalyses the reaction tRNA(Arg) + L-arginine + ATP = L-arginyl-tRNA(Arg) + AMP + diphosphate. The protein is Arginine--tRNA ligase of Ureaplasma parvum serovar 3 (strain ATCC 27815 / 27 / NCTC 11736).